The sequence spans 299 residues: MRSKPDWLKVKMPTGDTFYQMRNLMKLYKLNTVCEEAACPNVGECWNKKHATVMILGSTCTRACAFCNVATGIPDKLDPHEPQNLAKAINSLKLHHVVITSVDRDDLPDGGAGHFVECIEEIRKRDDNITIEILTPDFLNKHGAIDKIAAVAPDVYNHNVETVPRLYARIRPKARYFHSLYLLKAVKYKNPKIFTKSGIMVGLGETKEEIYQVMDDLRSADVDFITIGQYLQPTPKHAVVDRYVTPEEFDHYKYVAYSKGFLMVASGPLVRSSYHAEEDFQKLKQNRTAMLMRAESNSI.

Residues cysteine 34, cysteine 39, cysteine 45, cysteine 60, cysteine 64, cysteine 67, and serine 273 each coordinate [4Fe-4S] cluster. The Radical SAM core domain maps to 46–262; sequence WNKKHATVMI…KYVAYSKGFL (217 aa).

This sequence belongs to the radical SAM superfamily. Lipoyl synthase family. The cofactor is [4Fe-4S] cluster.

It localises to the cytoplasm. It catalyses the reaction [[Fe-S] cluster scaffold protein carrying a second [4Fe-4S](2+) cluster] + N(6)-octanoyl-L-lysyl-[protein] + 2 oxidized [2Fe-2S]-[ferredoxin] + 2 S-adenosyl-L-methionine + 4 H(+) = [[Fe-S] cluster scaffold protein] + N(6)-[(R)-dihydrolipoyl]-L-lysyl-[protein] + 4 Fe(3+) + 2 hydrogen sulfide + 2 5'-deoxyadenosine + 2 L-methionine + 2 reduced [2Fe-2S]-[ferredoxin]. It functions in the pathway protein modification; protein lipoylation via endogenous pathway; protein N(6)-(lipoyl)lysine from octanoyl-[acyl-carrier-protein]: step 2/2. In terms of biological role, catalyzes the radical-mediated insertion of two sulfur atoms into the C-6 and C-8 positions of the octanoyl moiety bound to the lipoyl domains of lipoate-dependent enzymes, thereby converting the octanoylated domains into lipoylated derivatives. The sequence is that of Lipoyl synthase from Ehrlichia canis (strain Jake).